A 1000-amino-acid chain; its full sequence is C2 domain-containing protein 5 (1000 aa).

In terms of domain architecture, C2 spans 1–109 (MPGKLKVKIV…EAATVISGWF (109 aa)). The Ca(2+) site is built by aspartate 19, aspartate 26, aspartate 76, aspartate 78, serine 81, and aspartate 84. Serine 197 carries the phosphoserine; by PKB/AKT2 modification. Residues serine 200 and serine 260 each carry the phosphoserine modification. The interval 265–330 (MKEIPFNEDP…SGSAGKEGGP (66 aa)) is disordered. Residues 274-289 (PNPNTHSSGPSTPLKN) show a composition bias toward polar residues. A compositionally biased stretch (low complexity) spans 290–318 (QTYSFSPSKSYSRQSSSSDTDLSLTPKTG). Phosphoserine is present on residues serine 293, serine 295, serine 304, serine 305, and serine 306. Threonine 317 is modified (phosphothreonine). A compositionally biased stretch (gly residues) spans 319–328 (MGSGSAGKEG). The residue at position 323 (serine 323) is a Phosphoserine. Threonine 601 is subject to Phosphothreonine. Residues 639–669 (EIIGSPIPEPRQRSRLLRSQSESSDEVTELD) are disordered. 5 positions are modified to phosphoserine: serine 643, serine 657, serine 659, serine 661, and serine 662. Threonine 666 carries the phosphothreonine modification. Serine 671 is subject to Phosphoserine. Threonine 807 is modified (phosphothreonine). Phosphoserine is present on residues serine 817 and serine 852.

It depends on Ca(2+) as a cofactor. In terms of processing, phosphorylated on Ser-197 by active myristoylated kinase AKT2; insulin-stimulated phosphorylation by AKT2 regulates SLC2A4/GLUT4 translocation into the plasma membrane.

The protein localises to the cytoplasmic vesicle membrane. It localises to the cytoplasm. Its subcellular location is the cell cortex. It is found in the cell membrane. The protein resides in the cell projection. The protein localises to the ruffle. Required for insulin-stimulated glucose transport and glucose transporter SLC2A4/GLUT4 translocation from intracellular glucose storage vesicle (GSV) to the plasma membrane (PM) in adipocytes. Binds phospholipid membranes in a calcium-dependent manner and is necessary for the optimal membrane fusion between SLC2A4/GLUT4 GSV and the PM. The polypeptide is C2 domain-containing protein 5 (C2CD5) (Pongo abelii (Sumatran orangutan)).